A 471-amino-acid polypeptide reads, in one-letter code: Probable multidrug-efflux transporter MT1670 (471 aa).

A run of 14 helical transmembrane segments spans residues 23 to 43 (IVLAGGVALYATNEFLTISLL), 55 to 75 (LYAWVTTLYLVGSVVAATTVN), 91 to 111 (LAVFGLASLVCAAAPSMQILV), 116 to 136 (LQGIAGGLLAGLGYALINSTL), 146 to 166 (ALVSAMWGVATLIGPATGGLF), 174 to 194 (WAFGVMTLLTALMAMLVPVAL), 213 to 233 (VPVWSLLLMGAAALAISVAAL), 237 to 257 (LVQTAGLLAAAALLVAVFVVV), 279 to 299 (IYLTMSVQMIAAMVDTYVPLF), 308 to 328 (PVAAGFLGAALAVGWTVGEVA), 337 to 357 (VIGHVVAAAPLVMASGLALGA), 366 to 386 (VGIIALWALALLIIGTGIGIA), 410 to 430 (AINVVQLISGAFGAGLAGVVV), and 438 to 458 (VAAARGLYMAFTVLAAAGVIA).

The protein belongs to the major facilitator superfamily.

The protein resides in the cell membrane. Its function is as follows. Could be involved in fluoroquinolones efflux. This chain is Probable multidrug-efflux transporter MT1670, found in Mycobacterium tuberculosis (strain CDC 1551 / Oshkosh).